The sequence spans 304 residues: Sulfate adenylyltransferase subunit 2 (304 aa).

It belongs to the PAPS reductase family. CysD subfamily. As to quaternary structure, heterodimer composed of CysD, the smaller subunit, and CysN.

The enzyme catalyses sulfate + ATP + H(+) = adenosine 5'-phosphosulfate + diphosphate. The protein operates within sulfur metabolism; hydrogen sulfide biosynthesis; sulfite from sulfate: step 1/3. Functionally, with CysN forms the ATP sulfurylase (ATPS) that catalyzes the adenylation of sulfate producing adenosine 5'-phosphosulfate (APS) and diphosphate, the first enzymatic step in sulfur assimilation pathway. APS synthesis involves the formation of a high-energy phosphoric-sulfuric acid anhydride bond driven by GTP hydrolysis by CysN coupled to ATP hydrolysis by CysD. In Acinetobacter baylyi (strain ATCC 33305 / BD413 / ADP1), this protein is Sulfate adenylyltransferase subunit 2.